A 276-amino-acid polypeptide reads, in one-letter code: Large ribosomal subunit protein uL2 (276 aa).

Disordered regions lie at residues 1–60 and 226–276; these read MSIK…RHKR and NAVD…KRNQ. Residues 20–31 are compositionally biased toward basic and acidic residues; that stretch reads SKEEITREEPEK. 2 stretches are compositionally biased toward basic residues: residues 50-60 and 258-276; these read STRRQGGRHKR and KTRR…KRNQ.

The protein belongs to the universal ribosomal protein uL2 family. Part of the 50S ribosomal subunit. Forms a bridge to the 30S subunit in the 70S ribosome.

One of the primary rRNA binding proteins. Required for association of the 30S and 50S subunits to form the 70S ribosome, for tRNA binding and peptide bond formation. It has been suggested to have peptidyltransferase activity; this is somewhat controversial. Makes several contacts with the 16S rRNA in the 70S ribosome. The sequence is that of Large ribosomal subunit protein uL2 from Natranaerobius thermophilus (strain ATCC BAA-1301 / DSM 18059 / JW/NM-WN-LF).